The following is a 328-amino-acid chain: Malate dehydrogenase (328 aa).

12–18 is an NAD(+) binding site; the sequence is GAAGQIG. Substrate contacts are provided by Arg95 and Arg101. NAD(+) is bound by residues Asn108, Gln115, and 132–134; that span reads VGN. Substrate is bound by residues Asn134 and Arg165. His190 functions as the Proton acceptor in the catalytic mechanism.

It belongs to the LDH/MDH superfamily. MDH type 2 family.

It catalyses the reaction (S)-malate + NAD(+) = oxaloacetate + NADH + H(+). Its function is as follows. Catalyzes the reversible oxidation of malate to oxaloacetate. The chain is Malate dehydrogenase from Leptothrix cholodnii (strain ATCC 51168 / LMG 8142 / SP-6) (Leptothrix discophora (strain SP-6)).